A 341-amino-acid chain; its full sequence is MVQHITLHDMTLRDGMHPKRHQISLEQMKDIARGLDAAGVPLIEVTHGDGLGGASVNYGFPAHSDEEYLRAVLGELKQARVSALLLPGIGTVDHLRMAHEIGVHTIRVATHCTEADVSEQHIGMARKLGMDTVGFLMMAHMAPVQTLVQQALLMESYGANCLYITDSAGHMLPHDVTEKLGAVRQALRPETELGFHGHHNLAMGVANSLAAIACGASRIDAAAAGLGAGAGNTPMEVLVAVCERMGIETGVDVYRIADVAEDLVVPIMDHPIRIDRDALTLGYAGVYSSFLLFAKRAEAKYRIPAREILVELGRQRLVGGQEDMIEDTAITLARERGLLVP.

The Pyruvate carboxyltransferase domain maps to 5-257 (ITLHDMTLRD…ETGVDVYRIA (253 aa)). Residue 13–14 (RD) coordinates substrate. Position 14 (Asp14) interacts with Mn(2+). His17 serves as the catalytic Proton acceptor. Substrate-binding residues include Ser167 and His196. Mn(2+)-binding residues include His196 and His198. Tyr287 contributes to the substrate binding site.

It belongs to the 4-hydroxy-2-oxovalerate aldolase family.

It catalyses the reaction (S)-4-hydroxy-2-oxopentanoate = acetaldehyde + pyruvate. The sequence is that of 4-hydroxy-2-oxovalerate aldolase 3 (bpHI) from Cupriavidus necator (strain ATCC 17699 / DSM 428 / KCTC 22496 / NCIMB 10442 / H16 / Stanier 337) (Ralstonia eutropha).